A 72-amino-acid chain; its full sequence is Translation initiation factor IF-1 (72 aa).

Residues 1 to 72 (MAKDDVIEIE…TKGRITYRFK (72 aa)) enclose the S1-like domain.

The protein belongs to the IF-1 family. As to quaternary structure, component of the 30S ribosomal translation pre-initiation complex which assembles on the 30S ribosome in the order IF-2 and IF-3, IF-1 and N-formylmethionyl-tRNA(fMet); mRNA recruitment can occur at any time during PIC assembly.

Its subcellular location is the cytoplasm. Functionally, one of the essential components for the initiation of protein synthesis. Stabilizes the binding of IF-2 and IF-3 on the 30S subunit to which N-formylmethionyl-tRNA(fMet) subsequently binds. Helps modulate mRNA selection, yielding the 30S pre-initiation complex (PIC). Upon addition of the 50S ribosomal subunit IF-1, IF-2 and IF-3 are released leaving the mature 70S translation initiation complex. The sequence is that of Translation initiation factor IF-1 from Ligilactobacillus salivarius (strain UCC118) (Lactobacillus salivarius).